Here is an 829-residue protein sequence, read N- to C-terminus: Cap-specific mRNA (nucleoside-2'-O-)-methyltransferase 1 (829 aa).

The segment at 1–68 (MKRAAQASDE…DSQNSQGSMA (68 aa)) is disordered. The Bipartite nuclear localization signal signature appears at 2–16 (KRAAQASDEPLKKRK). Over residues 31 to 44 (QRTTSQDSSQSESL) the composition is skewed to low complexity. Polar residues predominate over residues 55–68 (SRPSDSQNSQGSMA). The 47-residue stretch at 79-125 (YNNVSQKLMAKMGFREGEGLGKYGQGRKEIVEASTQRGRRGLGLMLK) folds into the G-patch domain. Substrate-binding positions include 195–199 (KTVFD) and R210. In terms of domain architecture, RrmJ-type SAM-dependent 2'-O-MTase spans 223 to 442 (FFLNRAAMKM…ERYVVCKGLK (220 aa)). N226 serves as a coordination point for S-adenosyl-L-methionine. Residue K231 is part of the active site. Residues 269-275 (CAGPGGF) and 327-328 (DI) each bind S-adenosyl-L-methionine. D356 is a catalytic residue. 366 to 368 (NLQ) lines the substrate pocket. K396 functions as the Proton acceptor in the catalytic mechanism. N431 contacts substrate. The WW domain maps to 745-779 (KTVNDPWTMAFSKSSKRKFFYNKQTKESTYDLPAT).

It localises to the nucleus. It carries out the reaction a 5'-end (N(7)-methyl 5'-triphosphoguanosine)-ribonucleoside in mRNA + S-adenosyl-L-methionine = a 5'-end (N(7)-methyl 5'-triphosphoguanosine)-(2'-O-methyl-ribonucleoside) in mRNA + S-adenosyl-L-homocysteine + H(+). In terms of biological role, S-adenosyl-L-methionine-dependent methyltransferase that mediates mRNA cap1 2'-O-ribose methylation to the 5'-cap structure of mRNAs. Methylates the ribose of the first nucleotide of a m(7)GpppG-capped mRNA and small nuclear RNA (snRNA) to produce m(7)GpppRm (cap1). Displays a preference for cap0 transcripts. Cap1 modification is linked to higher levels of translation. May be involved in the interferon response pathway. The sequence is that of Cap-specific mRNA (nucleoside-2'-O-)-methyltransferase 1 (cmtr1) from Danio rerio (Zebrafish).